The sequence spans 760 residues: MTKQVLPLIEKIPQSIVGFLESSSYHWSSSLSKTTQAHARILKSGAQNDGYISAKLIASYSNYNCFNDADLVLQSIPDPTIYSFSSLIYALTKAKLFTQSIGVFSRMFSHGLIPDSHVLPNLFKVCAELSAFKVGKQIHCVSCVSGLDMDAFVQGSMFHMYMRCGRMGDARKVFDRMSDKDVVTCSALLCAYARKGCLEEVVRILSEMESSGIEANIVSWNGILSGFNRSGYHKEAVVMFQKIHHLGFCPDQVTVSSVLPSVGDSEMLNMGRLIHGYVIKQGLLKDKCVISAMIDMYGKSGHVYGIISLFNQFEMMEAGVCNAYITGLSRNGLVDKALEMFELFKEQTMELNVVSWTSIIAGCAQNGKDIEALELFREMQVAGVKPNHVTIPSMLPACGNIAALGHGRSTHGFAVRVHLLDNVHVGSALIDMYAKCGRINLSQIVFNMMPTKNLVCWNSLMNGFSMHGKAKEVMSIFESLMRTRLKPDFISFTSLLSACGQVGLTDEGWKYFKMMSEEYGIKPRLEHYSCMVNLLGRAGKLQEAYDLIKEMPFEPDSCVWGALLNSCRLQNNVDLAEIAAEKLFHLEPENPGTYVLLSNIYAAKGMWTEVDSIRNKMESLGLKKNPGCSWIQVKNRVYTLLAGDKSHPQIDQITEKMDEISKEMRKSGHRPNLDFALHDVEEQEQEQMLWGHSEKLAVVFGLLNTPDGTPLQVIKNLRICGDCHAVIKFISSYAGREIFIRDTNRFHHFKDGICSCGDFW.

PPR repeat units lie at residues Asp-49–Pro-79, Thr-80–Pro-114, Asp-115–Met-149, Asp-150–Lys-180, Asp-181–Ala-215, Asn-216–Pro-250, Asp-251–Lys-285, Asp-286–Met-316, Glu-317–Leu-351, Asn-352–Pro-386, Asn-387–Asp-421, Asn-422–Lys-452, Asn-453–Pro-487, Asp-488–Pro-523, and Arg-524–Glu-554. Residues Val-559–Lys-634 are type E motif. The segment at Asn-635–Arg-665 is type E(+) motif. The tract at residues Lys-666 to Trp-760 is type DYW motif.

The protein belongs to the PPR family. PCMP-H subfamily.

The polypeptide is Pentatricopeptide repeat-containing protein At1g20230 (PCMP-H21) (Arabidopsis thaliana (Mouse-ear cress)).